The sequence spans 3122 residues: DNA polymerase zeta catalytic subunit (3122 aa).

Disordered stretches follow at residues 270 to 289 (QRRRNRNESSQISQPESQDC), 425 to 457 (GYQGEKNRMPLPCHSFGESQNPQNSDDEENEPQ), 487 to 509 (LCRNAHRSSTEEDDSSSEEEMEW), 524 to 545 (LDGTADENSDNPLNNENSRAHS), and 842 to 886 (TSTK…TFEN). Residues 277-286 (ESSQISQPES) show a composition bias toward polar residues. The span at 497–509 (EEDDSSSEEEMEW) shows a compositional bias: acidic residues. Polar residues-rich tracts occupy residues 533–545 (DNPLNNENSRAHS) and 842–860 (TSTKSTETGATKDSCTHND). A Phosphoserine modification is found at S1029. 7 disordered regions span residues 1034 to 1075 (YPIY…TLSF), 1154 to 1285 (VYNT…PTGI), 1429 to 1453 (VSVSEQSKTSETCSPGNAASEESQT), 1538 to 1616 (KAQS…LSDD), 1842 to 1869 (NDVLTPTPDSSPRSTSSPLQSKNGSFTP), 1959 to 1979 (NPRPGSPLRNGQAVVNKESSN), and 2091 to 2138 (AAVP…RHSS). T1040 is modified (phosphothreonine). Composition is skewed to basic residues over residues 1042–1063 (KKSHRRKSKHKSAKKKPGKQHR) and 1166–1179 (KASRARAQVKKSKA). The segment covering 1215–1239 (RANEKSLSRKHAIPADEKMKPHSEA) has biased composition (basic and acidic residues). Positions 1243–1270 (PNHQSVSELTSSSGAQALSKQKEMSQTG) are enriched in polar residues. Residues 1429-1440 (VSVSEQSKTSET) show a composition bias toward low complexity. Polar residues-rich tracts occupy residues 1441–1453 (CSPGNAASEESQT) and 1538–1561 (KAQSTNVVQDSTSTHQPDKNISVS). The span at 1566 to 1587 (KANKRTRPVTSPRKPRTPRRTK) shows a compositional bias: basic residues. The span at 1588–1598 (PKEQTPRRLKV) shows a compositional bias: basic and acidic residues. The span at 1602-1615 (NLQTSGHLDNSLSD) shows a compositional bias: polar residues. The interval 1844 to 1895 (VLTPTPDSSPRSTSSPLQSKNGSFTPRTAHILKPLMSPPSREEIVATLLDHD) is mediates interaction with MAD2L2. Over residues 1846–1859 (TPTPDSSPRSTSSP) the composition is skewed to low complexity. Residues 1860–1869 (LQSKNGSFTP) show a composition bias toward polar residues. At S1964 the chain carries Phosphoserine. Residues C3034, C3037, C3046, and C3049 each contribute to the Zn(2+) site. The CysA-type zinc finger occupies 3034 to 3049 (CPVCDDLTQHGICSKC). Residues C3078, C3081, C3091, and C3096 each contribute to the [4Fe-4S] cluster site. The CysB motif motif lies at 3078 to 3096 (CRNCTGSFDRHIPCVSLNC).

It belongs to the DNA polymerase type-B family. As to quaternary structure, heterodimer with MAD2L2. This dimer forms the minimal DNA polymerase zeta complex (Pol-zeta2), with REV3L bearing DNA polymerase catalytic activity, although its activity is very low in this context. Component of the tetrameric Pol-zeta complex (Pol-zeta4), which consists of REV3L, MAD2L2, POLD2 and POLD3; Pol-zeta4 is the fully active form of DNA polymerase zeta. The cofactor is [4Fe-4S] cluster.

It localises to the nucleus. The catalysed reaction is DNA(n) + a 2'-deoxyribonucleoside 5'-triphosphate = DNA(n+1) + diphosphate. Its function is as follows. Catalytic subunit of the DNA polymerase zeta complex, an error-prone polymerase specialized in translesion DNA synthesis (TLS). Lacks an intrinsic 3'-5' exonuclease activity and thus has no proofreading function. The chain is DNA polymerase zeta catalytic subunit (Rev3l) from Mus musculus (Mouse).